The following is a 507-amino-acid chain: RNA demethylase ALKBH9B (507 aa).

2 disordered regions span residues 76 to 102 and 145 to 183; these read GSER…DNHS and QEDE…LSRD. Residues 89–100 show a composition bias toward basic and acidic residues; it reads DEKSENGEDCDN. Over residues 145-160 the composition is skewed to acidic residues; the sequence is QEDEFDEEEEEEEEER. A compositionally biased stretch (basic and acidic residues) spans 174 to 183; that stretch reads TPEKPKLSRD. A Fe2OG dioxygenase domain is found at 317–414; that stretch reads VPDSCIVNIY…RISITFRKMD (98 aa). His335, Asp337, and His396 together coordinate Fe cation. Arg405 lines the 2-oxoglutarate pocket. The interval 432-507 is disordered; the sequence is EPLPLDLNRS…MPRPSRRNYG (76 aa). Positions 440-450 are enriched in polar residues; the sequence is RSGSTSRFSRL. Basic residues predominate over residues 497–507; that stretch reads GMPRPSRRNYG.

The protein belongs to the alkB family. In terms of assembly, (Microbial infection) Interacts with the capsid protein ORF3b of the alfalfa mosaic virus (AMV). Fe(2+) serves as cofactor.

It localises to the cytoplasm. The protein localises to the P-body. Its subcellular location is the cytoplasmic granule. It carries out the reaction an N(6)-methyladenosine in mRNA + 2-oxoglutarate + O2 = an adenosine in mRNA + formaldehyde + succinate + CO2. Functionally, dioxygenase that demethylates RNA by oxidative demethylation: specifically demethylates N(6)-methyladenosine (m6A) RNA, the most prevalent internal modification of messenger RNA (mRNA) in higher eukaryotes. Modulates viral infection of the alfalfa mosaic virus (AMV) and the m6A abundance in its genomic RNAs. This is RNA demethylase ALKBH9B from Arabidopsis thaliana (Mouse-ear cress).